Reading from the N-terminus, the 279-residue chain is Phycobilisome rod-core linker polypeptide CpcG1 (279 aa).

A PBS-linker domain is found at 11–189 (TTQNQRVEGY…YWRNRLLEQF (179 aa)).

It belongs to the phycobilisome linker protein family. In terms of assembly, the phycobilisome is a hemidiscoidal structure that is composed of two distinct substructures: a core complex and a number of rods radiating from the core.

The protein resides in the cellular thylakoid membrane. In terms of biological role, rod-core linker protein required for attachment of phycocyanin to allophycocyanin in cores of phycobilisomes. Linker polypeptides determine the state of aggregation and the location of the disk-shaped phycobiliprotein units within the phycobilisome and modulate their spectroscopic properties in order to mediate a directed and optimal energy transfer. The protein is Phycobilisome rod-core linker polypeptide CpcG1 (cpcG1) of Mastigocladus laminosus (Fischerella sp.).